A 269-amino-acid chain; its full sequence is Ubiquinone/menaquinone biosynthesis C-methyltransferase UbiE (269 aa).

Residues Thr-92, Asp-113, and 141 to 142 (NA) contribute to the S-adenosyl-L-methionine site.

Belongs to the class I-like SAM-binding methyltransferase superfamily. MenG/UbiE family.

The enzyme catalyses a 2-demethylmenaquinol + S-adenosyl-L-methionine = a menaquinol + S-adenosyl-L-homocysteine + H(+). It carries out the reaction a 2-methoxy-6-(all-trans-polyprenyl)benzene-1,4-diol + S-adenosyl-L-methionine = a 5-methoxy-2-methyl-3-(all-trans-polyprenyl)benzene-1,4-diol + S-adenosyl-L-homocysteine + H(+). It participates in quinol/quinone metabolism; menaquinone biosynthesis; menaquinol from 1,4-dihydroxy-2-naphthoate: step 2/2. The protein operates within cofactor biosynthesis; ubiquinone biosynthesis. Its function is as follows. Methyltransferase required for the conversion of demethylmenaquinol (DMKH2) to menaquinol (MKH2) and the conversion of 2-polyprenyl-6-methoxy-1,4-benzoquinol (DDMQH2) to 2-polyprenyl-3-methyl-6-methoxy-1,4-benzoquinol (DMQH2). The sequence is that of Ubiquinone/menaquinone biosynthesis C-methyltransferase UbiE from Brucella melitensis biotype 2 (strain ATCC 23457).